Consider the following 245-residue polypeptide: Orotidine 5'-phosphate decarboxylase (245 aa).

Substrate is bound by residues Asp-22, Lys-44, 71-80 (DLKFHDIPNT), Thr-131, Arg-192, Gln-201, Gly-221, and Arg-222. The Proton donor role is filled by Lys-73.

The protein belongs to the OMP decarboxylase family. Type 1 subfamily. As to quaternary structure, homodimer.

It carries out the reaction orotidine 5'-phosphate + H(+) = UMP + CO2. The protein operates within pyrimidine metabolism; UMP biosynthesis via de novo pathway; UMP from orotate: step 2/2. Catalyzes the decarboxylation of orotidine 5'-monophosphate (OMP) to uridine 5'-monophosphate (UMP). The sequence is that of Orotidine 5'-phosphate decarboxylase from Salmonella paratyphi A (strain ATCC 9150 / SARB42).